Here is a 418-residue protein sequence, read N- to C-terminus: Inner capsid protein sigma-2 (418 aa).

Belongs to the orthoreovirus sigma-1 protein family. As to quaternary structure, interacts with protein mu-NS; in viral inclusions.

Its subcellular location is the virion. In terms of biological role, inner capsid (core) component. This chain is Inner capsid protein sigma-2 (S2), found in Mammalia (T1L).